Reading from the N-terminus, the 1081-residue chain is Teashirt homolog 3 (1081 aa).

Disordered stretches follow at residues 141 to 161 (PSSE…SSCG) and 238 to 257 (HYRD…WSKP). A compositionally biased stretch (low complexity) spans 148 to 161 (GSSSSSSSSSSSCG). 2 consecutive C2H2-type zinc fingers follow at residues 214–238 (FRCK…ETGH) and 275–299 (LKCM…KTKH). Basic and acidic residues predominate over residues 238–247 (HYRDDNHETD). The segment at 325-364 (SLELELPSSPDSTGGTPKATISDTNDALQKNSNPYITPNN) is disordered. Residues 335–364 (DSTGGTPKATISDTNDALQKNSNPYITPNN) are compositionally biased toward polar residues. The segment at 386–404 (LKCMECGSSHDTLQELTAH) adopts a C2H2-type 3; atypical zinc-finger fold. The span at 473-491 (EVDKEKAVTDEKPKQKDKP) shows a compositional bias: basic and acidic residues. Disordered stretches follow at residues 473-502 (EVDK…DISS), 579-604 (NSEI…PMPK), 626-687 (EKMK…LAEP), and 855-897 (TESH…RQSN). A compositionally biased stretch (polar residues) spans 581–603 (EIVSPTKNQTLVSPPSSQTSPMP). Positions 606–630 (NFHAMEELVKKVTEKVAKVEEKMKE) form a coiled coil. The residue at position 682 (serine 682) is a Phosphoserine. Residues 856-869 (ESHTSKSSTPSSIS) show a composition bias toward low complexity. The segment at residues 891 to 961 (RKGRQSNWNP…NVKYQLRRTG (71 aa)) is a DNA-binding region (homeobox; atypical). 2 consecutive C2H2-type zinc fingers follow at residues 976–998 (FFCN…LESH) and 1041–1064 (YQCK…SKTH).

It belongs to the teashirt C2H2-type zinc-finger protein family. As to quaternary structure, interacts (via homeobox domain) with APBB1 (via PID domain 1). Interacts (via N-terminus) with HDAC1 and HDAC2; the interaction is direct. Found in a trimeric complex with APBB1 and HDAC1; the interaction between HDAC1 and APBB1 is mediated by TSHZ3. As to expression, expressed in brain; strongly reduced in post-mortem elderly subjects with Alzheimer disease. Expressed in the fetal neocortex.

It localises to the nucleus. The protein localises to the cell projection. The protein resides in the growth cone. In terms of biological role, transcriptional regulator involved in developmental processes. Functions in association with APBB1, SET and HDAC factors as a transcriptional repressor, that inhibits the expression of CASP4. TSHZ3-mediated transcription repression involves the recruitment of histone deacetylases HDAC1 and HDAC2. Associates with chromatin in a region surrounding the CASP4 transcriptional start site(s). Regulates the development of neurons involved in both respiratory rhythm and airflow control. Promotes maintenance of nucleus ambiguus (nA) motoneurons, which govern upper airway function, and establishes a respiratory rhythm generator (RRG) activity compatible with survival at birth. Involved in the differentiation of the proximal uretic smooth muscle cells during developmental processes. Involved in the up-regulation of myocardin, that directs the expression of smooth muscle cells in the proximal ureter. Involved in the modulation of glutamatergic synaptic transmission and long-term synaptic potentiation. The polypeptide is Teashirt homolog 3 (TSHZ3) (Homo sapiens (Human)).